The sequence spans 238 residues: uncharacterized protein (238 aa).

This is an uncharacterized protein from Rickettsia prowazekii (strain Madrid E).